The following is a 367-amino-acid chain: uncharacterized protein (367 aa).

Its subcellular location is the mitochondrion. This is an uncharacterized protein from Paramecium tetraurelia.